We begin with the raw amino-acid sequence, 157 residues long: Endoribonuclease YbeY (157 aa).

The Zn(2+) site is built by histidine 111, histidine 115, and histidine 121.

Belongs to the endoribonuclease YbeY family. Zn(2+) serves as cofactor.

The protein resides in the cytoplasm. In terms of biological role, single strand-specific metallo-endoribonuclease involved in late-stage 70S ribosome quality control and in maturation of the 3' terminus of the 16S rRNA. The sequence is that of Endoribonuclease YbeY from Pseudomonas entomophila (strain L48).